A 307-amino-acid chain; its full sequence is Fructose-bisphosphate aldolase (307 aa).

Residue serine 49 participates in D-glyceraldehyde 3-phosphate binding. Catalysis depends on aspartate 82, which acts as the Proton donor. Residues histidine 83, aspartate 104, glutamate 134, and histidine 180 each contribute to the Zn(2+) site. Glycine 181 lines the dihydroxyacetone phosphate pocket. Position 210 (histidine 210) interacts with Zn(2+). Residues 211–213 (GAS) and 253–256 (NTDT) contribute to the dihydroxyacetone phosphate site.

The protein belongs to the class II fructose-bisphosphate aldolase family. Homodimer. It depends on Zn(2+) as a cofactor.

It carries out the reaction beta-D-fructose 1,6-bisphosphate = D-glyceraldehyde 3-phosphate + dihydroxyacetone phosphate. It participates in carbohydrate degradation; glycolysis; D-glyceraldehyde 3-phosphate and glycerone phosphate from D-glucose: step 4/4. Catalyzes the aldol condensation of dihydroxyacetone phosphate (DHAP or glycerone-phosphate) with glyceraldehyde 3-phosphate (G3P) to form fructose 1,6-bisphosphate (FBP) in gluconeogenesis and the reverse reaction in glycolysis. This is Fructose-bisphosphate aldolase (fba) from Helicobacter pylori (strain J99 / ATCC 700824) (Campylobacter pylori J99).